Reading from the N-terminus, the 125-residue chain is Histone H2A (125 aa).

The segment covering 1-18 (MSGRGKGGKAKGKSKSRS) has biased composition (basic residues). Residues 1–23 (MSGRGKGGKAKGKSKSRSSRAGL) are disordered. An N-acetylserine modification is found at serine 2. Residue serine 2 is modified to Phosphoserine. At glutamine 104 the chain carries N5-methylglutamine.

This sequence belongs to the histone H2A family. The nucleosome is a histone octamer containing two molecules each of H2A, H2B, H3 and H4 assembled in one H3-H4 heterotetramer and two H2A-H2B heterodimers. The octamer wraps approximately 147 bp of DNA.

The protein localises to the nucleus. It localises to the chromosome. Functionally, core component of nucleosome. Nucleosomes wrap and compact DNA into chromatin, limiting DNA accessibility to the cellular machineries which require DNA as a template. Histones thereby play a central role in transcription regulation, DNA repair, DNA replication and chromosomal stability. DNA accessibility is regulated via a complex set of post-translational modifications of histones, also called histone code, and nucleosome remodeling. The protein is Histone H2A of Urechis caupo (Innkeeper worm).